Here is a 312-residue protein sequence, read N- to C-terminus: Glycerol-3-phosphate dehydrogenase [NAD(P)+] (312 aa).

Residues W11, R30, R31, and K95 each coordinate NADPH. 3 residues coordinate sn-glycerol 3-phosphate: K95, G123, and S125. Residue A127 participates in NADPH binding. K177, D230, S240, R241, and N242 together coordinate sn-glycerol 3-phosphate. Residue K177 is the Proton acceptor of the active site. R241 is a binding site for NADPH. NADPH is bound by residues V265 and E267.

Belongs to the NAD-dependent glycerol-3-phosphate dehydrogenase family.

It is found in the cytoplasm. It carries out the reaction sn-glycerol 3-phosphate + NAD(+) = dihydroxyacetone phosphate + NADH + H(+). The catalysed reaction is sn-glycerol 3-phosphate + NADP(+) = dihydroxyacetone phosphate + NADPH + H(+). Its pathway is membrane lipid metabolism; glycerophospholipid metabolism. Catalyzes the reduction of the glycolytic intermediate dihydroxyacetone phosphate (DHAP) to sn-glycerol 3-phosphate (G3P), the key precursor for phospholipid synthesis. In Helicobacter pylori (strain HPAG1), this protein is Glycerol-3-phosphate dehydrogenase [NAD(P)+].